Consider the following 270-residue polypeptide: Large ribosomal subunit protein uL30 (270 aa).

Methionine 1 carries the N-acetylmethionine modification. Repeat copies occupy residues 7 to 18 (KKKKVATVPGTL), 19 to 29 (KKKVPAGPKTL), 30 to 40 (KKKVPAVPETL), 41 to 52 (KKKRRNFAELKV), 53 to 64 (KRLRKKFALKTL), and 65 to 76 (RKARRKLIYEKA). Residues 7–76 (KKKKVATVPG…ARRKLIYEKA (70 aa)) are 6 X 12 AA tandem repeats. Threonine 39 bears the Phosphothreonine mark. Lysine 146 carries the N6-acetyllysine modification. Lysine 149 is subject to N6-succinyllysine. Phosphotyrosine is present on tyrosine 161.

This sequence belongs to the universal ribosomal protein uL30 family. As to quaternary structure, component of the large ribosomal subunit. Homodimer. Interacts with DHX33.

It is found in the cytoplasm. Functionally, component of the large ribosomal subunit. The ribosome is a large ribonucleoprotein complex responsible for the synthesis of proteins in the cell. Binds to G-rich structures in 28S rRNA and in mRNAs. Plays a regulatory role in the translation apparatus; inhibits cell-free translation of mRNAs. This is Large ribosomal subunit protein uL30 (Rpl7) from Mus musculus (Mouse).